We begin with the raw amino-acid sequence, 154 residues long: Large ribosomal subunit protein uL22c (154 aa).

The protein belongs to the universal ribosomal protein uL22 family. In terms of assembly, part of the 50S ribosomal subunit.

It localises to the plastid. The protein resides in the chloroplast. Functionally, this protein binds specifically to 23S rRNA. The globular domain of the protein is located near the polypeptide exit tunnel on the outside of the subunit, while an extended beta-hairpin is found that lines the wall of the exit tunnel in the center of the 70S ribosome. This chain is Large ribosomal subunit protein uL22c (rpl22), found in Helianthus annuus (Common sunflower).